A 149-amino-acid chain; its full sequence is Protein SprT-like (149 aa).

One can recognise a SprT-like domain in the interval 6–147 (LQKLTEDISL…CGKCRGKIKR (142 aa)). His-67 lines the Zn(2+) pocket. Glu-68 is an active-site residue. Position 71 (His-71) interacts with Zn(2+).

This sequence belongs to the SprT family. Zn(2+) serves as cofactor.

It is found in the cytoplasm. This is Protein SprT-like from Bacillus velezensis (strain DSM 23117 / BGSC 10A6 / LMG 26770 / FZB42) (Bacillus amyloliquefaciens subsp. plantarum).